Here is a 164-residue protein sequence, read N- to C-terminus: Cyclic pyranopterin monophosphate synthase (164 aa).

Residues 73 to 75 (LCH) and 111 to 112 (ME) contribute to the substrate site. Asp126 is a catalytic residue.

This sequence belongs to the MoaC family. In terms of assembly, homohexamer; trimer of dimers.

It carries out the reaction (8S)-3',8-cyclo-7,8-dihydroguanosine 5'-triphosphate = cyclic pyranopterin phosphate + diphosphate. It functions in the pathway cofactor biosynthesis; molybdopterin biosynthesis. Functionally, catalyzes the conversion of (8S)-3',8-cyclo-7,8-dihydroguanosine 5'-triphosphate to cyclic pyranopterin monophosphate (cPMP). This chain is Cyclic pyranopterin monophosphate synthase, found in Herpetosiphon aurantiacus (strain ATCC 23779 / DSM 785 / 114-95).